Consider the following 525-residue polypeptide: Bifunctional purine biosynthesis protein PurH (525 aa).

Residues 1 to 148 enclose the MGS-like domain; it reads MPSNNLIKNA…KNYKNVIVIV (148 aa).

This sequence belongs to the PurH family.

The catalysed reaction is (6R)-10-formyltetrahydrofolate + 5-amino-1-(5-phospho-beta-D-ribosyl)imidazole-4-carboxamide = 5-formamido-1-(5-phospho-D-ribosyl)imidazole-4-carboxamide + (6S)-5,6,7,8-tetrahydrofolate. The enzyme catalyses IMP + H2O = 5-formamido-1-(5-phospho-D-ribosyl)imidazole-4-carboxamide. The protein operates within purine metabolism; IMP biosynthesis via de novo pathway; 5-formamido-1-(5-phospho-D-ribosyl)imidazole-4-carboxamide from 5-amino-1-(5-phospho-D-ribosyl)imidazole-4-carboxamide (10-formyl THF route): step 1/1. It functions in the pathway purine metabolism; IMP biosynthesis via de novo pathway; IMP from 5-formamido-1-(5-phospho-D-ribosyl)imidazole-4-carboxamide: step 1/1. This Buchnera aphidicola subsp. Acyrthosiphon pisum (strain 5A) protein is Bifunctional purine biosynthesis protein PurH.